The following is a 163-amino-acid chain: Crossover junction endodeoxyribonuclease RuvC (163 aa).

Residues Asp9, Glu76, and Asp148 contribute to the active site. Asp9, Glu76, and Asp148 together coordinate Mg(2+).

Belongs to the RuvC family. In terms of assembly, homodimer which binds Holliday junction (HJ) DNA. The HJ becomes 2-fold symmetrical on binding to RuvC with unstacked arms; it has a different conformation from HJ DNA in complex with RuvA. In the full resolvosome a probable DNA-RuvA(4)-RuvB(12)-RuvC(2) complex forms which resolves the HJ. Mg(2+) serves as cofactor.

It is found in the cytoplasm. It catalyses the reaction Endonucleolytic cleavage at a junction such as a reciprocal single-stranded crossover between two homologous DNA duplexes (Holliday junction).. In terms of biological role, the RuvA-RuvB-RuvC complex processes Holliday junction (HJ) DNA during genetic recombination and DNA repair. Endonuclease that resolves HJ intermediates. Cleaves cruciform DNA by making single-stranded nicks across the HJ at symmetrical positions within the homologous arms, yielding a 5'-phosphate and a 3'-hydroxyl group; requires a central core of homology in the junction. The consensus cleavage sequence is 5'-(A/T)TT(C/G)-3'. Cleavage occurs on the 3'-side of the TT dinucleotide at the point of strand exchange. HJ branch migration catalyzed by RuvA-RuvB allows RuvC to scan DNA until it finds its consensus sequence, where it cleaves and resolves the cruciform DNA. This is Crossover junction endodeoxyribonuclease RuvC from Trichodesmium erythraeum (strain IMS101).